Here is a 95-residue protein sequence, read N- to C-terminus: Histone-like DNA-binding protein (95 aa).

The protein belongs to the bacterial histone-like protein family.

The protein is Histone-like DNA-binding protein of Rickettsia typhi (strain ATCC VR-144 / Wilmington).